The sequence spans 536 residues: MDNIERLYKCYEILSEAGDKISEHVDEYKEILKAVKGTSKEKRLASQFIGNFFKHFPDLADTAIDAQFDLCEDDDTQIRRQAIKDLPKLCQGNADATIRVGDTLAQLLILDDPTELQQVNNSLLAIIKLDTKSSIAGLFQQISTGDETTRERCLKFIATKLLTMGPTVITKEIEDYIVEEIKKALQDVTADEFHLCMTILGATKLGSTITGHAELVKLATEQAELNNTDADIIAVDDEVVERFIQCASAAAPYFSKTIKSTAFVAHVCDKLLPIKTWNMIATAVSQDQIQLRLLKVFAEMITNTDKLDNASERINAVYNVLLEYMPLPKLSDEDLGDTPPSFQFSHAECLLYALHTLGKNHPNSLSFVEDAEKLKDFRARLQYLARGTQGYIKKLEESLKGKTGEELKTEENQLKQTALKTTSNINILIRDLFHSPPIFKHDIVLSWIVPKNNKLGKRHAPITFGEKAAANGKDKDQEPEKKSRPSNDQKFYSPPSGKYSNKVNQSYGNNNRTRQRGGGGGGGSGGGYRNRRFNKY.

The disordered stretch occupies residues 462 to 536 (ITFGEKAAAN…GYRNRRFNKY (75 aa)). Residues 472-487 (GKDKDQEPEKKSRPSN) show a composition bias toward basic and acidic residues. Over residues 498-507 (KYSNKVNQSY) the composition is skewed to polar residues. Over residues 516–528 (RGGGGGGGSGGGY) the composition is skewed to gly residues.

This sequence belongs to the API5 family.

It is found in the nucleus. Its function is as follows. Antiapoptotic factor. Also known to efficiently suppress E2F1-induced apoptosis. In Drosophila melanogaster (Fruit fly), this protein is Apoptosis inhibitor 5 homolog.